The chain runs to 220 residues: Cytidylate kinase (220 aa).

Residue 10-18 coordinates ATP; that stretch reads GPAGAGKST.

Belongs to the cytidylate kinase family. Type 1 subfamily.

It localises to the cytoplasm. It catalyses the reaction CMP + ATP = CDP + ADP. The catalysed reaction is dCMP + ATP = dCDP + ADP. This chain is Cytidylate kinase, found in Alkaliphilus metalliredigens (strain QYMF).